The sequence spans 71 residues: uncharacterized protein (71 aa).

Residues 12–32 traverse the membrane as a helical segment; the sequence is FLVSIAFFGLAPTIPLLAIAL.

It is found in the membrane. This is an uncharacterized protein from Sinorhizobium fredii (strain NBRC 101917 / NGR234).